The sequence spans 432 residues: Histidine--tRNA ligase (432 aa).

This sequence belongs to the class-II aminoacyl-tRNA synthetase family. Homodimer.

Its subcellular location is the cytoplasm. It catalyses the reaction tRNA(His) + L-histidine + ATP = L-histidyl-tRNA(His) + AMP + diphosphate + H(+). The polypeptide is Histidine--tRNA ligase (Symbiobacterium thermophilum (strain DSM 24528 / JCM 14929 / IAM 14863 / T)).